The primary structure comprises 159 residues: Ribosomal RNA large subunit methyltransferase H (159 aa).

Residues leucine 76, glycine 108, and 127–132 (FSKMTL) each bind S-adenosyl-L-methionine.

This sequence belongs to the RNA methyltransferase RlmH family. As to quaternary structure, homodimer.

It localises to the cytoplasm. The enzyme catalyses pseudouridine(1915) in 23S rRNA + S-adenosyl-L-methionine = N(3)-methylpseudouridine(1915) in 23S rRNA + S-adenosyl-L-homocysteine + H(+). Its function is as follows. Specifically methylates the pseudouridine at position 1915 (m3Psi1915) in 23S rRNA. This is Ribosomal RNA large subunit methyltransferase H from Bacillus anthracis (strain CDC 684 / NRRL 3495).